Here is a 271-residue protein sequence, read N- to C-terminus: Energy-coupling factor transporter ATP-binding protein EcfA (271 aa).

The region spanning 2–231 (ISIQNLTFYY…PLFLQQYKLT (230 aa)) is the ABC transporter domain. 34 to 41 (GHNGSGKS) serves as a coordination point for ATP.

Belongs to the ABC transporter superfamily. Energy-coupling factor EcfA family. In terms of assembly, forms a stable energy-coupling factor (ECF) transporter complex composed of 2 membrane-embedded substrate-binding proteins (S component), 2 ATP-binding proteins (A component) and 2 transmembrane proteins (T component).

The protein localises to the cell membrane. ATP-binding (A) component of a common energy-coupling factor (ECF) ABC-transporter complex. Unlike classic ABC transporters this ECF transporter provides the energy necessary to transport a number of different substrates. The polypeptide is Energy-coupling factor transporter ATP-binding protein EcfA (Aster yellows witches'-broom phytoplasma (strain AYWB)).